A 340-amino-acid polypeptide reads, in one-letter code: Adenosine deaminase (340 aa).

Zn(2+) is bound by residues H15 and H17. H17, D19, and G172 together coordinate substrate. Residue H199 participates in Zn(2+) binding. E202 serves as the catalytic Proton donor. Residue D279 participates in Zn(2+) binding.

It belongs to the metallo-dependent hydrolases superfamily. Adenosine and AMP deaminases family. Adenosine deaminase subfamily. Zn(2+) is required as a cofactor.

The catalysed reaction is adenosine + H2O + H(+) = inosine + NH4(+). The enzyme catalyses 2'-deoxyadenosine + H2O + H(+) = 2'-deoxyinosine + NH4(+). Catalyzes the hydrolytic deamination of adenosine and 2-deoxyadenosine. The sequence is that of Adenosine deaminase from Streptococcus agalactiae serotype III (strain NEM316).